The chain runs to 311 residues: MKVAVLGAAGGIGQALSLLLKTQLPAGSELSLYDVAPVVPGVAVDLSHIPTDVKVAGFGRDDLNGALTGADIVLIPAGMPRKPGMDRADLFNVNAGIIKVLAEGIVASCPKALVGVITNPVNGTVPIVAEVFKKAGTYDAARLFGVTTLDVIRSEAFVAELKGLDVATVKVPVIGGHSGTTILPLLSQVEGATFSDEEVAALTPRIQNAGTEVVEAKAGGGSATLSMGAAAARFCMSLVKGLQGEDVVDYAYVEGNGADAQFFAQPVRLGVNGVSEILPYGELSAFEQKAKEDMLATLKKDIQEGVDFMAS.

NAD(+) contacts are provided by residues 7–13 (GAAGGIG) and D34. The substrate site is built by R81 and R87. NAD(+)-binding positions include N94 and 117-119 (ITN). Substrate is bound by residues N119 and R153. The Proton acceptor role is filled by H177. Residue M227 participates in NAD(+) binding.

This sequence belongs to the LDH/MDH superfamily. MDH type 1 family. In terms of assembly, homodimer.

The enzyme catalyses (S)-malate + NAD(+) = oxaloacetate + NADH + H(+). In terms of biological role, catalyzes the reversible oxidation of malate to oxaloacetate. The chain is Malate dehydrogenase from Colwellia psychrerythraea (strain 34H / ATCC BAA-681) (Vibrio psychroerythus).